The chain runs to 246 residues: MSKQRDKGRIYEKRRAKFQELQKKIGITFQNEKLLIQAFTHSSYVNEHRRRFHEDNERLEFLGDAVLELTVSQYLFQKFPHMSEGQLTKLRAAIVCEPSLVKFANALSFGELVLLGKGEELTGGRTRPALLADVFEAFIGALYLDQGMDVVLRFLGQTMFPKIDEGAFSHVMDFKSQLQELVQRDGSGTLEYAILEEKGPAHNKEFVARVALNGQELGVGVGRSKKEAEQHAAQMALETLRAADKQ.

The RNase III domain maps to phenylalanine 18 to glycine 147. Residue glutamate 60 coordinates Mg(2+). The active site involves aspartate 64. 2 residues coordinate Mg(2+): aspartate 133 and glutamate 136. Glutamate 136 is a catalytic residue. Positions aspartate 173–alanine 242 constitute a DRBM domain.

It belongs to the ribonuclease III family. As to quaternary structure, homodimer. Mg(2+) is required as a cofactor.

The protein resides in the cytoplasm. The catalysed reaction is Endonucleolytic cleavage to 5'-phosphomonoester.. Its function is as follows. Digests double-stranded RNA. Involved in the processing of primary rRNA transcript to yield the immediate precursors to the large and small rRNAs (23S and 16S). Processes some mRNAs, and tRNAs when they are encoded in the rRNA operon. Processes pre-crRNA and tracrRNA of type II CRISPR loci if present in the organism. In Geobacillus thermodenitrificans (strain NG80-2), this protein is Ribonuclease 3.